The sequence spans 136 residues: MSKLNKSIIAEFESAQITRQVPQFSQGDTIVVNVKVKEGNRERLQAYEGVVIATKNAGLNSAFTVRKISHGYGVERVFQTHSPIIESIEIKRRGKVRAAKLYYLRGLEGKAARIKEDLAATAHEKLARKTVTAKAG.

It belongs to the bacterial ribosomal protein bL19 family.

This protein is located at the 30S-50S ribosomal subunit interface and may play a role in the structure and function of the aminoacyl-tRNA binding site. The chain is Large ribosomal subunit protein bL19 from Xylella fastidiosa (strain M23).